The following is a 529-amino-acid chain: MSRQLNIKSSGDKGNFSVHSAVVPRKAVGSLASYCAAGRGAGAGFGSRSLYSLGGNRRISFNVAGGGVRAGGYGFRPGSGYGGGRASGFAGSMFGSVALGPACLSVCPPGGIHQVTVNKSLLAPLNVELDPEIQKVRAQEREQIKVLNDKFASFIDKVRFLEQQNQVLETKWELLQQLDLNNCKKNLEPILEGYISNLRKQLETLSGDRVRLDSELRSMRDLVEDYKKRYEVEINRRTTAENEFVVLKKDADAAYAVKVELQAKVDSLDKEIKFLKCLYDAEIAQIQTHASETSVILSMDNNRDLDLDSIIAEVRMHYEEIALKSKAEAEALYQTKIQELQLAASRHGDDLKHTRSEMVELNRLIQRIRCEIGNVKKQRASLETAIADAEQRGDNALKDAQAKLDELEGALHQAKEELARMLREYQELMSLKLALDMEIATYRKLLEGEECRMSGENPSSVSISVISSSSYSYHHPSSAGVDLGASAVAGSSGSTQSGQTKTTEARGGDLKDTQGKSTPASIPARKATR.

The tract at residues Met-1–Gln-139 is head. Residues Glu-140–Leu-175 form a coil 1A region. One can recognise an IF rod domain in the interval Glu-140–Met-453. Residues Gln-176–Tyr-194 form a linker 1 region. The interval Ile-195–Ile-286 is coil 1B. The tract at residues Gln-287–Ile-310 is linker 12. A coil 2 region spans residues Ile-311–Glu-449. Positions Glu-450–Arg-529 are tail. Residues Gly-484–Thr-500 show a composition bias toward low complexity. Residues Gly-484–Arg-529 are disordered. The segment covering Thr-503 to Gln-514 has biased composition (basic and acidic residues). Thr-513 is subject to Phosphothreonine.

It belongs to the intermediate filament family. Heterotetramer of two type I and two type II keratins. Highly expressed in hair follicles from scalp. In hair, it is specifically present in the inner root sheath (IRS) of the hair follicle. Present in the IRS Huxley layer, but not in Henle layer or cuticle of the IRS. In the IRS Huxley layer, it is expressed in specialized Huxley cells, termed 'Fluegelzellen, along the area of differentiated Henle cells (at protein level).

Its function is as follows. Has a role in hair formation. Specific component of keratin intermediate filaments in the inner root sheath (IRS) of the hair follicle. The chain is Keratin, type II cytoskeletal 74 (KRT74) from Homo sapiens (Human).